The sequence spans 222 residues: uncharacterized protein (222 aa).

This is an uncharacterized protein from Acanthamoeba polyphaga mimivirus (APMV).